A 359-amino-acid polypeptide reads, in one-letter code: Cytoplasmic tRNA 2-thiolation protein 2 (359 aa).

The protein belongs to the CTU2/NCS2 family.

It localises to the cytoplasm. Its pathway is tRNA modification; 5-methoxycarbonylmethyl-2-thiouridine-tRNA biosynthesis. In terms of biological role, plays a central role in 2-thiolation of mcm(5)S(2)U at tRNA wobble positions of tRNA(Lys), tRNA(Glu) and tRNA(Gln). May act by forming a heterodimer with NCS6 that ligates sulfur from thiocarboxylated URM1 onto the uridine of tRNAs at wobble position. Prior mcm(5) tRNA modification by the elongator complex is required for 2-thiolation. May also be involved in protein urmylation. The polypeptide is Cytoplasmic tRNA 2-thiolation protein 2 (Ajellomyces capsulatus (strain NAm1 / WU24) (Darling's disease fungus)).